We begin with the raw amino-acid sequence, 72 residues long: MKLTCVVIVAVLLLTACQLLTADDSRGTQKHRALRSDTKLSMSTRCKGKGAPCRKTMYDCCSGSCGRRGKCG.

Residues 1–22 form the signal peptide; that stretch reads MKLTCVVIVAVLLLTACQLLTA. Positions 23–45 are excised as a propeptide; that stretch reads DDSRGTQKHRALRSDTKLSMSTR. 3 cysteine pairs are disulfide-bonded: Cys-46–Cys-61, Cys-53–Cys-65, and Cys-60–Cys-71. At Cys-71 the chain carries Cysteine amide.

Belongs to the conotoxin O1 superfamily. As to expression, expressed by the venom duct.

Its subcellular location is the secreted. Its function is as follows. Omega-conotoxins act at presynaptic membranes, they bind and block voltage-gated calcium channels (Cav). This toxin blocks N-, P- and Q-type calcium channels. The chain is Omega-conotoxin-like S6.6 from Conus striatus (Striated cone).